The sequence spans 92 residues: Small ribosomal subunit protein uS15c (92 aa).

It belongs to the universal ribosomal protein uS15 family. As to quaternary structure, part of the 30S ribosomal subunit.

The protein resides in the plastid. It is found in the chloroplast. The protein is Small ribosomal subunit protein uS15c (rps15) of Carica papaya (Papaya).